The following is a 305-amino-acid chain: Spore coat protein CotA (305 aa).

The protein resides in the spore coat. It localises to the spore. The protein localises to the perispore. Its function is as follows. Contributes to maintain proper thickness of the spore coat. May contribute to the formation of polar appendages. May play an important role in assembly of the outer layers of the spore coat. This chain is Spore coat protein CotA, found in Clostridioides difficile (strain 630) (Peptoclostridium difficile).